A 270-amino-acid chain; its full sequence is Undecaprenyl-diphosphatase 1 (270 aa).

6 helical membrane-spanning segments follow: residues 41–61 (IEGF…VLLV), 88–108 (FRFI…GVLF), 117–137 (KDGV…LFLI), 192–212 (FSFL…ITDI), 218–238 (LGEL…ATYF), and 250–270 (GNLV…LIFA).

Belongs to the UppP family.

It is found in the cell membrane. It carries out the reaction di-trans,octa-cis-undecaprenyl diphosphate + H2O = di-trans,octa-cis-undecaprenyl phosphate + phosphate + H(+). In terms of biological role, catalyzes the dephosphorylation of undecaprenyl diphosphate (UPP). Confers resistance to bacitracin. The protein is Undecaprenyl-diphosphatase 1 of Bacillus licheniformis (strain ATCC 14580 / DSM 13 / JCM 2505 / CCUG 7422 / NBRC 12200 / NCIMB 9375 / NCTC 10341 / NRRL NRS-1264 / Gibson 46).